Reading from the N-terminus, the 327-residue chain is L-lactate dehydrogenase (327 aa).

Residues Val18, Asp39, Lys44, Tyr69, and 83 to 84 (GA) each bind NAD(+). Residues Gln86, Arg92, and 124 to 127 (NPVD) contribute to the substrate site. NAD(+) contacts are provided by residues 122–124 (AAN) and Ser147. 152-155 (DSAR) lines the substrate pocket. Arg157 and His172 together coordinate beta-D-fructose 1,6-bisphosphate. His179 serves as the catalytic Proton acceptor. At Tyr224 the chain carries Phosphotyrosine. Thr233 contributes to the substrate binding site.

It belongs to the LDH/MDH superfamily. LDH family. In terms of assembly, homotetramer.

The protein resides in the cytoplasm. It carries out the reaction (S)-lactate + NAD(+) = pyruvate + NADH + H(+). It functions in the pathway fermentation; pyruvate fermentation to lactate; (S)-lactate from pyruvate: step 1/1. Allosterically activated by fructose 1,6-bisphosphate (FBP). Functionally, catalyzes the conversion of lactate to pyruvate. This Streptococcus equi subsp. equi (strain 4047) protein is L-lactate dehydrogenase.